The following is a 757-amino-acid chain: Ecdysone receptor (757 aa).

The interval 1–300 is modulating; it reads MMKRRWSNNG…GPAPRLQEEL (300 aa). Disordered regions lie at residues 126-192 and 235-289; these read NSVG…GGGG and LNHH…KKIK. The span at 128-138 shows a compositional bias: gly residues; that stretch reads VGGGGGGGGVP. Residues 167–183 are compositionally biased toward low complexity; the sequence is NSNSNHSNSSSHHTNGH. NR C4-type zinc fingers lie at residues 301-321 and 337-361; these read CLVC…CEGC and CKFG…LKKC. Positions 301–373 form a DNA-binding region, nuclear receptor; sequence CLVCGDRASG…VGMRPECVVP (73 aa). The NR LBD domain occupies 442 to 677; it reads NQLAVIYKLI…FLEEIWDVHA (236 aa). The segment covering 717-734 has biased composition (low complexity); sequence TSMATSSSSSLSPSAAST. A disordered region spans residues 717-739; it reads TSMATSSSSSLSPSAASTPNGGA.

The protein belongs to the nuclear hormone receptor family. NR1 subfamily.

It localises to the nucleus. Its function is as follows. Receptor for ecdysone. Binds to ecdysone response elements (ECRES). This chain is Ecdysone receptor (EcR), found in Lucilia cuprina (Green bottle fly).